Consider the following 254-residue polypeptide: Undecaprenyl-diphosphatase (254 aa).

8 consecutive transmembrane segments (helical) span residues 1 to 21 (MDII…FLPI), 41 to 61 (LTKA…MLIY), 70 to 90 (IDLW…GFIF), 97 to 117 (LFNV…FLIV), 134 to 154 (VSWT…IPGT), 175 to 195 (AEFS…YDLL), 209 to 229 (FLIG…LFLV), and 234 to 254 (FTFV…LMIL).

This sequence belongs to the UppP family.

It localises to the cell inner membrane. It catalyses the reaction di-trans,octa-cis-undecaprenyl diphosphate + H2O = di-trans,octa-cis-undecaprenyl phosphate + phosphate + H(+). In terms of biological role, catalyzes the dephosphorylation of undecaprenyl diphosphate (UPP). Confers resistance to bacitracin. The sequence is that of Undecaprenyl-diphosphatase from Sulfurovum sp. (strain NBC37-1).